A 176-amino-acid chain; its full sequence is Cytochrome c oxidase subunit 5b-1, mitochondrial (176 aa).

Residues 1–55 (MWRRIVSSQLKTLAADVVAASPRRSIAATTRPVGFYLAANRSAISASSFVIPRRF) constitute a mitochondrion transit peptide. Zn(2+)-binding residues include Cys-122, Cys-146, and Cys-149. Residues 157–176 (VVGPGGPPDGHGDEDDEHHH) form a disordered region.

Belongs to the cytochrome c oxidase subunit 5B (TC 3.D.4.11) family.

The protein localises to the mitochondrion inner membrane. In terms of biological role, this protein is one of the nuclear-coded polypeptide chains of cytochrome c oxidase, the terminal oxidase in mitochondrial electron transport. The chain is Cytochrome c oxidase subunit 5b-1, mitochondrial (COX5B-1) from Arabidopsis thaliana (Mouse-ear cress).